Reading from the N-terminus, the 711-residue chain is C-Jun-amino-terminal kinase-interacting protein 1 (711 aa).

The tract at residues 1–27 (MAERESGGLGGGAASPPAASPFLGLHI) is disordered. Low complexity predominate over residues 14–25 (ASPPAASPFLGL). Phosphoserine occurs at positions 15, 29, and 40. Residues 78 to 371 (AGGGGAGSRL…PPRASLSSDT (294 aa)) are disordered. T103 is subject to Phosphothreonine; by MAPK8, MAPK9 and MAPK10. Over residues 105 to 116 (GAEDDEEDDDEE) the composition is skewed to acidic residues. Positions 127 to 285 (PKAESGQEPA…EATEEIYLTP (159 aa)) are JNK-binding domain (JBD). Over residues 139–149 (GQGQSQGQSQG) the composition is skewed to low complexity. The residue at position 152 (S152) is a Phosphoserine. The segment at 157 to 176 (RPKRPTTLNLFPQVPRSQDT) is minimal inhibitory domain (MID). Over residues 162 to 182 (TTLNLFPQVPRSQDTLNNNSL) the composition is skewed to polar residues. 5 positions are modified to phosphoserine: S181, S187, S193, S195, and S196. Residues 194-204 (RSSSPLKTGEQ) show a composition bias toward polar residues. T205 carries the phosphothreonine; by MAPK8, MAPK9 and MAPK10 modification. Position 214 is a phosphoserine (S214). Positions 228–244 (DRGTSTDSPCRRSTATQ) are enriched in polar residues. Positions 267–277 (IHYQADVRLEA) are enriched in basic and acidic residues. Residues 283-471 (LTPVQRPPDA…NVFMSGRSRS (189 aa)) are interaction with MAP3K7. Residues S311, S328, S330, S340, S355, S366, S369, S407, and S409 each carry the phosphoserine modification. Short sequence motifs (D-box) lie at residues 353-360 (RGSLGEPP) and 364-372 (RASLSSDTS). T411 carries the phosphothreonine modification. Residues 429–451 (EEYEEAPRPQPPACLSEDSTPDE) are disordered. Residues S444 and S447 each carry the phosphoserine modification. Phosphothreonine is present on T448. Phosphoserine occurs at positions 469, 471, 472, and 473. The segment at 471-660 (SSSAESFGLF…PKNNKYFGFI (190 aa)) is interaction with VRK2. One can recognise an SH3 domain in the interval 488-549 (EQEQTHRAIF…PAYYAIEVTK (62 aa)). A PID domain is found at 561–700 (SDWVDQFRVK…FQQFYKQFVE (140 aa)).

This sequence belongs to the JIP scaffold family. In terms of assembly, forms homo- or heterooligomeric complexes. Binds specific components of the JNK signaling pathway namely, MAPK8/JNK1, MAPK9/JNK2, MAPK10/JNK3, MAP2K7/MKK7, MAP3K11/MLK3 and DLK1. Also binds the proline-rich domain-containing splice variant of apolipoprotein E receptor 2 (ApoER2). Interacts, via the PID domain, with ARHGEF28. Binds the cytoplasmic tails of LRP1 and LRP2 (Megalin). Binds the TPR motif-containing C-terminal of KNS2, then the pre-assembled MAPK8IP1 scaffolding complexes are transported as a cargo of kinesin, to the required subcellular location. Interacts with the cytoplasmic domain of APP. Interacts with DCLK2. Interacts with MAP3K7/TAK1. Interacts with isoform 1 and isoform 2 of VRK2. Found in a complex with SH3RF1, RAC1, MAP3K11/MLK3, MAP2K7/MKK7 and MAPK8/JNK1. Found in a complex with SH3RF1, RAC2, MAP3K7/TAK1, MAP2K7/MKK7, MAPK8/JNK1 and MAPK9/JNK2. Interacts with SH3RF2. Phosphorylated by MAPK8, MAPK9 and MAPK10. Phosphorylation on Thr-103 is also necessary for the dissociation and activation of MAP3K12. Phosphorylated by isoform 1 and isoform 2 of VRK2. Hyperphosphorylated during mitosis following activation of stress-activated and MAP kinases. In terms of processing, ubiquitinated. Two preliminary events are required to prime for ubiquitination; phosphorylation and an increased in intracellular calcium concentration. Then, the calcium influx initiates ubiquitination and degradation by the ubiquitin-proteasome pathway. As to expression, highly expressed in brain. Expressed in neurons, localizing to neurite tips in differentiating cells. Also expressed in the pancreas, testis and prostate. Low levels in heart, ovary and small intestine. Decreased levels in pancreatic beta cells sensitize cells to IL-1-beta-induced apoptosis.

The protein resides in the cytoplasm. It localises to the perinuclear region. The protein localises to the nucleus. Its subcellular location is the endoplasmic reticulum membrane. It is found in the mitochondrion membrane. Functionally, the JNK-interacting protein (JIP) group of scaffold proteins selectively mediates JNK signaling by aggregating specific components of the MAPK cascade to form a functional JNK signaling module. Required for JNK activation in response to excitotoxic stress. Cytoplasmic MAPK8IP1 causes inhibition of JNK-regulated activity by retaining JNK in the cytoplasm and inhibiting JNK phosphorylation of c-Jun. May also participate in ApoER2-specific reelin signaling. Directly, or indirectly, regulates GLUT2 gene expression and beta-cell function. Appears to have a role in cell signaling in mature and developing nerve terminals. May function as a regulator of vesicle transport, through interactions with the JNK-signaling components and motor proteins. Functions as an anti-apoptotic protein and whose level seems to influence the beta-cell death or survival response. Acts as a scaffold protein that coordinates with SH3RF1 in organizing different components of the JNK pathway, including RAC1 or RAC2, MAP3K11/MLK3 or MAP3K7/TAK1, MAP2K7/MKK7, MAPK8/JNK1 and/or MAPK9/JNK2 into a functional multiprotein complex to ensure the effective activation of the JNK signaling pathway. Regulates the activation of MAPK8/JNK1 and differentiation of CD8(+) T-cells. In Homo sapiens (Human), this protein is C-Jun-amino-terminal kinase-interacting protein 1 (MAPK8IP1).